Reading from the N-terminus, the 762-residue chain is 5-methyltetrahydropteroyltriglutamate--homocysteine methyltransferase (762 aa).

Residues Arg17–Lys20 and Lys111 each bind 5-methyltetrahydropteroyltri-L-glutamate. L-homocysteine contacts are provided by residues Ile435–Ser437 and Glu488. Residues Ile435–Ser437 and Glu488 contribute to the L-methionine site. Residues Arg519–Cys520 and Trp565 each bind 5-methyltetrahydropteroyltri-L-glutamate. Asp603 contacts L-homocysteine. Asp603 provides a ligand contact to L-methionine. Residue Glu609 participates in 5-methyltetrahydropteroyltri-L-glutamate binding. Residues His645, Cys647, and Glu669 each contribute to the Zn(2+) site. The active-site Proton donor is the His698. A Zn(2+)-binding site is contributed by Cys730.

The protein belongs to the vitamin-B12 independent methionine synthase family. The cofactor is Zn(2+).

It catalyses the reaction 5-methyltetrahydropteroyltri-L-glutamate + L-homocysteine = tetrahydropteroyltri-L-glutamate + L-methionine. It participates in amino-acid biosynthesis; L-methionine biosynthesis via de novo pathway; L-methionine from L-homocysteine (MetE route): step 1/1. In terms of biological role, catalyzes the transfer of a methyl group from 5-methyltetrahydrofolate to homocysteine resulting in methionine formation. The polypeptide is 5-methyltetrahydropteroyltriglutamate--homocysteine methyltransferase (Bacillus cereus (strain ATCC 14579 / DSM 31 / CCUG 7414 / JCM 2152 / NBRC 15305 / NCIMB 9373 / NCTC 2599 / NRRL B-3711)).